The following is a 473-amino-acid chain: Ribulose bisphosphate carboxylase large chain 2 (473 aa).

Substrate is bound by residues asparagine 116 and threonine 166. Lysine 168 acts as the Proton acceptor in catalysis. Position 170 (lysine 170) interacts with substrate. Mg(2+) is bound by residues lysine 194, aspartate 196, and glutamate 197. Lysine 194 is modified (N6-carboxylysine). The active-site Proton acceptor is histidine 287. Residues arginine 288, histidine 320, and serine 372 each coordinate substrate.

It belongs to the RuBisCO large chain family. Type I subfamily. Heterohexadecamer of 8 large chains and 8 small chains. Mg(2+) serves as cofactor.

It catalyses the reaction 2 (2R)-3-phosphoglycerate + 2 H(+) = D-ribulose 1,5-bisphosphate + CO2 + H2O. It carries out the reaction D-ribulose 1,5-bisphosphate + O2 = 2-phosphoglycolate + (2R)-3-phosphoglycerate + 2 H(+). Its function is as follows. RuBisCO catalyzes two reactions: the carboxylation of D-ribulose 1,5-bisphosphate, the primary event in carbon dioxide fixation, as well as the oxidative fragmentation of the pentose substrate. Both reactions occur simultaneously and in competition at the same active site. The polypeptide is Ribulose bisphosphate carboxylase large chain 2 (Cereibacter sphaeroides (strain ATCC 17025 / ATH 2.4.3) (Rhodobacter sphaeroides)).